A 504-amino-acid chain; its full sequence is Probable cytosol aminopeptidase (504 aa).

Residues lysine 274 and aspartate 279 each coordinate Mn(2+). Lysine 286 is an active-site residue. Residues aspartate 297, aspartate 356, and glutamate 358 each coordinate Mn(2+). The active site involves arginine 360.

It belongs to the peptidase M17 family. The cofactor is Mn(2+).

The protein resides in the cytoplasm. The enzyme catalyses Release of an N-terminal amino acid, Xaa-|-Yaa-, in which Xaa is preferably Leu, but may be other amino acids including Pro although not Arg or Lys, and Yaa may be Pro. Amino acid amides and methyl esters are also readily hydrolyzed, but rates on arylamides are exceedingly low.. The catalysed reaction is Release of an N-terminal amino acid, preferentially leucine, but not glutamic or aspartic acids.. Presumably involved in the processing and regular turnover of intracellular proteins. Catalyzes the removal of unsubstituted N-terminal amino acids from various peptides. In Blochmanniella floridana, this protein is Probable cytosol aminopeptidase.